A 148-amino-acid chain; its full sequence is Ribonuclease P protein component (148 aa).

Residues 119 to 148 are disordered; the sequence is PLPAAPGTMPPARAPRPSSLSPTEPDPRSD.

Belongs to the RnpA family. As to quaternary structure, consists of a catalytic RNA component (M1 or rnpB) and a protein subunit.

The catalysed reaction is Endonucleolytic cleavage of RNA, removing 5'-extranucleotides from tRNA precursor.. In terms of biological role, RNaseP catalyzes the removal of the 5'-leader sequence from pre-tRNA to produce the mature 5'-terminus. It can also cleave other RNA substrates such as 4.5S RNA. The protein component plays an auxiliary but essential role in vivo by binding to the 5'-leader sequence and broadening the substrate specificity of the ribozyme. This chain is Ribonuclease P protein component, found in Xanthomonas campestris pv. campestris (strain 8004).